A 321-amino-acid polypeptide reads, in one-letter code: Quinol oxidase subunit 2 (321 aa).

Residues 1–25 (MIFLFRALKPLLVLALLTVVFVLGG) form the signal peptide. A lipid anchor (N-palmitoyl cysteine) is attached at Cys-26. A lipid anchor (S-diacylglycerol cysteine) is attached at Cys-26. The next 2 membrane-spanning stretches (helical) occupy residues 49–69 (SIGFMLFIVGVVFVLFTIILV) and 90–110 (TFLEVVWTVIPILIVIALSVP). The tract at residues 294–321 (QAVSPHSKTDPFENVKKNEFKKSDDTEE) is disordered. Basic and acidic residues predominate over residues 300-321 (SKTDPFENVKKNEFKKSDDTEE).

It belongs to the cytochrome c oxidase subunit 2 family. Interacts with FloT.

It is found in the cell membrane. Its subcellular location is the membrane raft. The enzyme catalyses 2 a quinol + O2 = 2 a quinone + 2 H2O. In terms of biological role, catalyzes quinol oxidation with the concomitant reduction of oxygen to water. Major component for energy conversion during vegetative growth. Subunit II transfers the electrons from a quinol to the binuclear center of the catalytic subunit I. The chain is Quinol oxidase subunit 2 (qoxA) from Bacillus subtilis (strain 168).